We begin with the raw amino-acid sequence, 531 residues long: Plant UBX domain-containing protein 11 (531 aa).

Met-1 is modified (N-acetylmethionine). Positions 160 to 173 (AVASPSTASSVQPS) are enriched in low complexity. 2 disordered regions span residues 160-316 (AVAS…KASD) and 441-531 (ANAS…NDRR). 2 stretches are compositionally biased toward polar residues: residues 174 to 190 (ETKS…NNDG) and 201 to 214 (EPSN…NQPA). The segment covering 290 to 301 (VDTKETMKPKDE) has biased composition (basic and acidic residues). A UBX domain is found at 312-390 (KKASDVHLNI…RLFDRQALVV (79 aa)). 2 stretches are compositionally biased toward polar residues: residues 441–478 (ANAS…GRSN) and 486–496 (TSRIGSNIHTL).

As to quaternary structure, interacts with CDC48A.

This Arabidopsis thaliana (Mouse-ear cress) protein is Plant UBX domain-containing protein 11.